Here is a 192-residue protein sequence, read N- to C-terminus: MGTQTNKGFFYDEFLKVLKEQQVDVRLMARDSEKDAAISAHKRILSARSEVFEEMFESDKYKASSKLETITLSEMKHEVLEAFVDFTYSDGSMLSEKAKQHAMSLYSAAKDYEIPRLWCLCRKELIASLNMSNALRVLQLAQIPYDESLSVAAFTTIKNSKLKLSSSTKVKVFVVNHPNGPLEITRAIFPRN.

The BTB domain occupies 23 to 96; that stretch reads VDVRLMARDS…TYSDGSMLSE (74 aa).

The protein operates within protein modification; protein ubiquitination. Functionally, may act as a substrate-specific adapter of an E3 ubiquitin-protein ligase complex (CUL3-RBX1-BTB) which mediates the ubiquitination and subsequent proteasomal degradation of target proteins. In Arabidopsis thaliana (Mouse-ear cress), this protein is Putative BTB/POZ domain-containing protein At4g04090.